A 457-amino-acid chain; its full sequence is Argininosuccinate lyase (457 aa).

This sequence belongs to the lyase 1 family. Argininosuccinate lyase subfamily.

It localises to the cytoplasm. The enzyme catalyses 2-(N(omega)-L-arginino)succinate = fumarate + L-arginine. It participates in amino-acid biosynthesis; L-arginine biosynthesis; L-arginine from L-ornithine and carbamoyl phosphate: step 3/3. In Bacillus pumilus (strain SAFR-032), this protein is Argininosuccinate lyase.